Reading from the N-terminus, the 441-residue chain is GTPase Der (441 aa).

EngA-type G domains follow at residues 4 to 169 (PIVA…PEGS) and 178 to 353 (PKVA…DAQT). GTP contacts are provided by residues 10-17 (GRPNVGKS), 57-61 (DTGGI), 120-123 (NKVD), 184-191 (GKPNVGKS), 231-235 (DTAGL), and 296-299 (NKWD). One can recognise a KH-like domain in the interval 354–438 (MRIPTGVLNE…SIRFINRERK (85 aa)).

This sequence belongs to the TRAFAC class TrmE-Era-EngA-EngB-Septin-like GTPase superfamily. EngA (Der) GTPase family. As to quaternary structure, associates with the 50S ribosomal subunit.

In terms of biological role, GTPase that plays an essential role in the late steps of ribosome biogenesis. In Lachnospira eligens (strain ATCC 27750 / DSM 3376 / VPI C15-48 / C15-B4) (Eubacterium eligens), this protein is GTPase Der.